The sequence spans 360 residues: S-adenosylmethionine:tRNA ribosyltransferase-isomerase (360 aa).

It belongs to the QueA family. In terms of assembly, monomer.

It localises to the cytoplasm. The catalysed reaction is 7-aminomethyl-7-carbaguanosine(34) in tRNA + S-adenosyl-L-methionine = epoxyqueuosine(34) in tRNA + adenine + L-methionine + 2 H(+). The protein operates within tRNA modification; tRNA-queuosine biosynthesis. Transfers and isomerizes the ribose moiety from AdoMet to the 7-aminomethyl group of 7-deazaguanine (preQ1-tRNA) to give epoxyqueuosine (oQ-tRNA). The chain is S-adenosylmethionine:tRNA ribosyltransferase-isomerase from Sinorhizobium medicae (strain WSM419) (Ensifer medicae).